A 269-amino-acid polypeptide reads, in one-letter code: 3-methyl-2-oxobutanoate hydroxymethyltransferase (269 aa).

Residues D50 and D89 each coordinate Mg(2+). 3-methyl-2-oxobutanoate is bound by residues 50–51 (DS), D89, and K118. Mg(2+) is bound at residue E120. The Proton acceptor role is filled by E187.

Belongs to the PanB family. As to quaternary structure, homodecamer; pentamer of dimers. Mg(2+) serves as cofactor.

It localises to the cytoplasm. The catalysed reaction is 3-methyl-2-oxobutanoate + (6R)-5,10-methylene-5,6,7,8-tetrahydrofolate + H2O = 2-dehydropantoate + (6S)-5,6,7,8-tetrahydrofolate. Its pathway is cofactor biosynthesis; (R)-pantothenate biosynthesis; (R)-pantoate from 3-methyl-2-oxobutanoate: step 1/2. Its function is as follows. Catalyzes the reversible reaction in which hydroxymethyl group from 5,10-methylenetetrahydrofolate is transferred onto alpha-ketoisovalerate to form ketopantoate. In Aliarcobacter butzleri (strain RM4018) (Arcobacter butzleri), this protein is 3-methyl-2-oxobutanoate hydroxymethyltransferase.